Here is a 401-residue protein sequence, read N- to C-terminus: 4-hydroxy-3-methylbut-2-en-1-yl diphosphate synthase (ferredoxin) (401 aa).

Residues C306, C309, C340, and E347 each coordinate [4Fe-4S] cluster.

It belongs to the IspG family. [4Fe-4S] cluster serves as cofactor.

The catalysed reaction is (2E)-4-hydroxy-3-methylbut-2-enyl diphosphate + 2 oxidized [2Fe-2S]-[ferredoxin] + H2O = 2-C-methyl-D-erythritol 2,4-cyclic diphosphate + 2 reduced [2Fe-2S]-[ferredoxin] + H(+). It participates in isoprenoid biosynthesis; isopentenyl diphosphate biosynthesis via DXP pathway; isopentenyl diphosphate from 1-deoxy-D-xylulose 5-phosphate: step 5/6. Functionally, converts 2C-methyl-D-erythritol 2,4-cyclodiphosphate (ME-2,4cPP) into 1-hydroxy-2-methyl-2-(E)-butenyl 4-diphosphate. This is 4-hydroxy-3-methylbut-2-en-1-yl diphosphate synthase (ferredoxin) from Synechococcus sp. (strain CC9902).